The following is a 239-amino-acid chain: Fatty acid metabolism regulator protein (239 aa).

In terms of domain architecture, HTH gntR-type spans 6-74; the sequence is QSPAGFAEEY…HGKPTKVNNF (69 aa). The H-T-H motif DNA-binding region spans 34–53; the sequence is ERELSELIGVTRTTLREVLQ.

In terms of assembly, homodimer.

The protein resides in the cytoplasm. Functionally, multifunctional regulator of fatty acid metabolism. Represses transcription of at least eight genes required for fatty acid transport and beta-oxidation including fadA, fadB, fadD, fadL and fadE. Activates transcription of at least three genes required for unsaturated fatty acid biosynthesis: fabA, fabB and iclR, the gene encoding the transcriptional regulator of the aceBAK operon encoding the glyoxylate shunt enzymes. Binding of FadR is specifically inhibited by long chain fatty acyl-CoA compounds. In Salmonella typhimurium (strain LT2 / SGSC1412 / ATCC 700720), this protein is Fatty acid metabolism regulator protein.